The primary structure comprises 868 residues: Receptor-like protein 32 (868 aa).

Positions 1–32 are cleaved as a signal peptide; that stretch reads MKDSWNSTSIIPFTFSSLIFFLFTFDFQDVFG. The Extracellular portion of the chain corresponds to 33 to 815; that stretch reads VPTKHLCRLE…PPELEEEDRE (783 aa). N-linked (GlcNAc...) asparagine glycans are attached at residues Asn-73, Asn-109, Asn-141, and Asn-165. 25 LRR repeats span residues 118-142, 143-166, 168-188, 189-213, 214-237, 239-261, 262-285, 287-310, 312-334, 335-360, 362-385, 389-412, 413-436, 438-459, 465-489, 490-515, 517-538, 540-560, 561-586, 588-606, 607-630, 675-699, 700-723, 724-747, and 749-772; these read LRFLTTLDLSYNYFSGQIPSCIENF, SHLTTLDLSKNYFSGGIPSSIGNL, QLTFLDLSGNEFVGEMPFFGN, MNQLTNLYVDSNDLTGIFPLSLLNL, KHLSDLSLSRNQFTGTLPSNMSSL, NLEYFEAWGNAFTGTLPSSLFTI, ASLTSINLRNNQLNGTLEFGNISS, STLTVLDISNNNFIGPIPKSISKF, NLQDLDLSHLNTQGPVDFSIFTN, LKSLQLLNLSHLNTTTTIDLNALFSS, LNSIYSMDLSGNHVSATTKISVAD, TQLISQLYLSGCGITEFPELLRSQ, HKMTNLDISNNKIKGQVPGWLWTL, KLIFVDLSNNIFTGFERSTEHG, KPSMQYLVGSNNNFTGKIPSFICAL, RSLITLDLSDNNLNGSIPPCMGNLKS, LSFLNLRQNRLGGGLPRSIFKS, RSLDVGHNQLVGKLPRSFIRL, SALEVLNVENNRINDTFPFWLSSLKK, QVLVLRSNAFHGPIHHASF, HTLRIINLSHNQFSGTLPANYFVN, LKIYTALDFSENKLEGEIPRSIGLL, KELHVLNLSSNAFTGHIPSSMGNL, RELESLDVSQNKLSGEIPQELGNL, and YLAYMNFSHNQLGGLVPGGTQFRR. Residue Asn-233 is glycosylated (N-linked (GlcNAc...) asparagine). Residues Asn-275 and Asn-282 are each glycosylated (N-linked (GlcNAc...) asparagine). N-linked (GlcNAc...) asparagine glycans are attached at residues Asn-342 and Asn-347. 2 N-linked (GlcNAc...) asparagine glycosylation sites follow: Asn-477 and Asn-503. Asn-574 carries N-linked (GlcNAc...) asparagine glycosylation. A glycan (N-linked (GlcNAc...) asparagine) is linked at Asn-613. Residues Asn-706, Asn-746, Asn-754, and Asn-774 are each glycosylated (N-linked (GlcNAc...) asparagine). The helical transmembrane segment at 816–836 threads the bilayer; that stretch reads VFSWIAAAIGFGPGIAFGLTI. Residues 837–868 lie on the Cytoplasmic side of the membrane; sequence RYILVFYKPDWFMHTFGHLQPSAHEKRLRRKQ.

The protein belongs to the RLP family.

The protein resides in the cell membrane. The polypeptide is Receptor-like protein 32 (Arabidopsis thaliana (Mouse-ear cress)).